Consider the following 637-residue polypeptide: Extracellular metalloproteinase 10 (637 aa).

Residues 1-19 form the signal peptide; that stretch reads MHGLLLAATLLSLPFNAVA. Residues 20–245 constitute a propeptide that is removed on maturation; the sequence is HVPPTTGLVR…VHNVVDYVAH (226 aa). Asn282 is a glycosylation site (N-linked (GlcNAc...) asparagine). His429 is a Zn(2+) binding site. Glu430 is a catalytic residue. His433 is a binding site for Zn(2+). An N-linked (GlcNAc...) asparagine glycan is attached at Asn502.

Belongs to the peptidase M36 family. The cofactor is Zn(2+).

It is found in the secreted. Secreted metalloproteinase that allows assimilation of proteinaceous substrates. This chain is Extracellular metalloproteinase 10 (MEP10), found in Uncinocarpus reesii (strain UAMH 1704).